A 121-amino-acid polypeptide reads, in one-letter code: Large ribosomal subunit protein bL12 (121 aa).

This sequence belongs to the bacterial ribosomal protein bL12 family. As to quaternary structure, homodimer. Part of the ribosomal stalk of the 50S ribosomal subunit. Forms a multimeric L10(L12)X complex, where L10 forms an elongated spine to which 2 to 4 L12 dimers bind in a sequential fashion. Binds GTP-bound translation factors.

Functionally, forms part of the ribosomal stalk which helps the ribosome interact with GTP-bound translation factors. Is thus essential for accurate translation. This chain is Large ribosomal subunit protein bL12, found in Xanthomonas euvesicatoria pv. vesicatoria (strain 85-10) (Xanthomonas campestris pv. vesicatoria).